The chain runs to 399 residues: S-adenosylmethionine synthase (399 aa).

His-17 provides a ligand contact to ATP. Position 19 (Asp-19) interacts with Mg(2+). Residue Glu-45 participates in K(+) binding. L-methionine is bound by residues Glu-58 and Gln-101. A flexible loop region spans residues 101 to 111 (QSPDIAQGVDE). Residues 177–179 (DAK), 244–245 (RF), Asp-253, 259–260 (RK), Ala-276, and Lys-280 contribute to the ATP site. An L-methionine-binding site is contributed by Asp-253. Position 284 (Lys-284) interacts with L-methionine.

It belongs to the AdoMet synthase family. In terms of assembly, homotetramer; dimer of dimers. The cofactor is Mg(2+). K(+) serves as cofactor.

The protein resides in the cytoplasm. The enzyme catalyses L-methionine + ATP + H2O = S-adenosyl-L-methionine + phosphate + diphosphate. Its pathway is amino-acid biosynthesis; S-adenosyl-L-methionine biosynthesis; S-adenosyl-L-methionine from L-methionine: step 1/1. Its function is as follows. Catalyzes the formation of S-adenosylmethionine (AdoMet) from methionine and ATP. The overall synthetic reaction is composed of two sequential steps, AdoMet formation and the subsequent tripolyphosphate hydrolysis which occurs prior to release of AdoMet from the enzyme. This Listeria monocytogenes serovar 1/2a (strain ATCC BAA-679 / EGD-e) protein is S-adenosylmethionine synthase.